A 449-amino-acid chain; its full sequence is Putative glycosyltransferase 7 (449 aa).

Residues 1–32 lie on the Cytoplasmic side of the membrane; that stretch reads MVSPETSSSHYQSSPMAKYAGTRTRPVVCISD. The helical; Signal-anchor for type II membrane protein transmembrane segment at 33-53 threads the bilayer; sequence VVLFLGGAFMSLILVWSFFSF. Over 54–449 the chain is Lumenal; it reads SSISPNLTVK…VPFDYPDEPW (396 aa). N-linked (GlcNAc...) asparagine glycosylation is found at Asn-59, Asn-123, and Asn-332.

The protein belongs to the glycosyltransferase 34 family.

It is found in the golgi apparatus membrane. Functionally, probable glycosyltransferase that may be involved in the biosynthesis of xyloglucan. This Arabidopsis thaliana (Mouse-ear cress) protein is Putative glycosyltransferase 7 (GT7).